A 313-amino-acid polypeptide reads, in one-letter code: Porphobilinogen deaminase (313 aa).

Cys-242 is subject to S-(dipyrrolylmethanemethyl)cysteine.

This sequence belongs to the HMBS family. In terms of assembly, monomer. Dipyrromethane is required as a cofactor.

The catalysed reaction is 4 porphobilinogen + H2O = hydroxymethylbilane + 4 NH4(+). Its pathway is porphyrin-containing compound metabolism; protoporphyrin-IX biosynthesis; coproporphyrinogen-III from 5-aminolevulinate: step 2/4. Functionally, tetrapolymerization of the monopyrrole PBG into the hydroxymethylbilane pre-uroporphyrinogen in several discrete steps. This chain is Porphobilinogen deaminase, found in Yersinia pseudotuberculosis serotype O:1b (strain IP 31758).